A 582-amino-acid chain; its full sequence is Guanine nucleotide-binding protein-like NSN1 (582 aa).

Positions methionine 1–arginine 46 are enriched in basic residues. Residues methionine 1–proline 58 are disordered. A basic region spans residues valine 2–lysine 49. Short sequence motifs (nuclear localization signal) lie at residues serine 5–arginine 12, leucine 22–histidine 29, and valine 69–glutamate 76. Positions leucine 15–leucine 94 form a coiled coil. The CP-type G domain maps to tyrosine 127 to leucine 311. The DARXP motif signature appears at aspartate 145 to proline 149. A G4 region spans residues asparagine 175 to aspartate 178. A GTP-binding site is contributed by asparagine 175 to aspartate 178. The segment at lysine 202–serine 204 is G5. The tract at residues glycine 260–serine 267 is G1. A GTP-binding site is contributed by asparagine 263–serine 268. The interval valine 281 to serine 456 is intermediate. The G2 stretch occupies residues glycine 286 to serine 290. GTP contacts are provided by residues aspartate 304–glycine 307 and glycine 307. The interval aspartate 304–glycine 307 is G3. Residues aspartate 463 to aspartate 551 are acidic. The tract at residues aspartate 469–leucine 545 is disordered. Over residues glutamate 476 to glutamate 496 the composition is skewed to acidic residues. The segment covering alanine 497–threonine 506 has biased composition (basic and acidic residues). A coiled-coil region spans residues alanine 515–lysine 537. The Nuclear localization signal 4 motif lies at threonine 522–lysine 529. Basic residues predominate over residues lysine 523–lysine 537.

Belongs to the TRAFAC class YlqF/YawG GTPase family. Interacts with EBP2 and PES. As to expression, mostly expressed in flowers, siliques and inflorescence apex, and, to a lower extent, in stems and leaves.

The protein localises to the nucleus. The protein resides in the nucleolus. In terms of biological role, involved in the differentiation of epidermal cells, probably via the regulation of the expression of meristem-related genes (e.g. CLV3, STM, KNAT1, CUC2 and AG) and of leaf polarity-related genes (e.g. YAB5, FIL, AS2, PHB and PHV). May play a role in regulating cellular proliferation. Necessary for flower development, probably by preventing apical dominance through the down-regulation of AG expression. Required for embryogenesis, leaf and cotyledon development, as well as for leaf polarity establishment. Plays an important role in plant growth and senescence by modulating ribosome biogenesis in nucleolus. Possesses GTPAse activity in vitro. Possesses RNA binding activity in vitro. Associates with ribosomes. The polypeptide is Guanine nucleotide-binding protein-like NSN1 (Arabidopsis thaliana (Mouse-ear cress)).